We begin with the raw amino-acid sequence, 1515 residues long: Adhesion G protein-coupled receptor L1 (1515 aa).

The N-terminal stretch at 1–24 (MARLAAALWSLCVTTVLVTSATQG) is a signal peptide. At 25 to 857 (LSRAGLPFGL…EIYQGRINEL (833 aa)) the chain is on the extracellular side. One can recognise an SUEL-type lectin domain in the interval 40–129 (ACEGYPIELR…KYLEVQYDCV (90 aa)). 5 disulfides stabilise this stretch: Cys-41/Cys-71, Cys-50/Cys-128, Cys-83/Cys-115, Cys-96/Cys-102, and Cys-140/Cys-322. Glu-42 contributes to the alpha-L-rhamnose binding site. N-linked (GlcNAc...) asparagine glycosylation occurs at Asn-98. Alpha-L-rhamnose is bound at residue 117-120 (GTYK). The region spanning 139 to 398 (VCPGTLQKVL…VVRYSLEFGP (260 aa)) is the Olfactomedin-like domain. The segment at 400–468 (DPSAGPATSP…APAPSTRRPP (69 aa)) is disordered. Residues 405–441 (PATSPPLSTTTTARPTPLTSTASPAATTPLRRAPLTT) show a composition bias toward low complexity. Pro residues predominate over residues 453 to 468 (DLPPATAPAPSTRRPP). 2 disulfides stabilise this stretch: Cys-480–Cys-515 and Cys-503–Cys-532. N-linked (GlcNAc...) asparagine glycans are attached at residues Asn-531, Asn-640, Asn-741, Asn-800, Asn-805, and Asn-826. The region spanning 669–850 (PARFLAAKQN…AVLMAHREIY (182 aa)) is the GAIN-B domain. 2 disulfide bridges follow: Cys-801/Cys-832 and Cys-820/Cys-834. The GPS stretch occupies residues 801–850 (CSFWNYSERSMLGYWSTQGCRLVESNKTHTTCACSHLTNFAVLMAHREIY). Residues 858–878 (LLSVITWVGIVISLVCLAICI) form a helical membrane-spanning segment. The Cytoplasmic portion of the chain corresponds to 879–892 (STFCFLRGLQTDRN). Residues 893 to 913 (TIHKNLCINLFLAELLFLVGI) form a helical membrane-spanning segment. Residues 914–919 (DKTQYE) lie on the Extracellular side of the membrane. A helical membrane pass occupies residues 920–940 (VACPIFAGLLHYFFLAAFSWL). At 941–964 (CLEGVHLYLLLVEVFESEYSRTKY) the chain is on the cytoplasmic side. The chain crosses the membrane as a helical span at residues 965–985 (YYLGGYCFPALVVGIAAAIDY). The Extracellular segment spans residues 986-1001 (RSYGTEKACWLRVDNY). The chain crosses the membrane as a helical span at residues 1002–1022 (FIWSFIGPVSFVIVVNLVFLM). The Cytoplasmic segment spans residues 1023–1049 (VTLHKMIRSSSVLKPDSSRLDNIKSWA). The helical transmembrane segment at 1050–1070 (LGAIALLFLLGLTWAFGLLFI) threads the bilayer. The Extracellular portion of the chain corresponds to 1071-1074 (NKES). A helical membrane pass occupies residues 1075-1095 (VVMAYLFTTFNAFQGVFIFVF). Residues 1096–1515 (HCALQKKVHK…DGQMQLVTSL (420 aa)) are Cytoplasmic-facing. The interval 1144–1184 (TQVPGQGRHIHQVSLGPRGRSALPESQKDPGGQSGPGDPLT) is disordered. Position 1237 is an omega-N-methylarginine (Arg-1237). Ser-1263 is subject to Phosphoserine. Disordered regions lie at residues 1291–1316 (FNNSYSLRSGDFPPGDGGPEPPRGRN), 1337–1369 (RGASGGAKGPPPEPPVPPVPGVSEDEAGGPGGA), 1401–1470 (ESES…SRPP), and 1492–1515 (YLAAPSLEGPGPDGDGQMQLVTSL). 2 stretches are compositionally biased toward pro residues: residues 1345-1356 (GPPPEPPVPPVP) and 1449-1461 (ALPPPPPAPPGPP). A phosphoserine mark is found at Ser-1497 and Ser-1514.

It belongs to the G-protein coupled receptor 2 family. Adhesion G-protein coupled receptor (ADGR) subfamily. Forms a heterodimer, consisting of a large extracellular region (p120) non-covalently linked to a seven-transmembrane moiety (p85). Interacts with syntaxin and with proteins of the SHANK family via the PDZ domain. Isoform 2 interacts with TENM2. Interacts (via extracellular domain) with FLRT1, FLRT2 and FLRT3 (via extracellular domain). Post-translationally, autoproteolytically cleaved into 2 subunits, an extracellular subunit and a seven-transmembrane subunit. This proteolytic processing takes place early in the biosynthetic pathway, either in the endoplasmic reticulum or in the early compartment of the Golgi apparatus. As to expression, expressed in the brain (at protein level). Brain specific distribution but low levels are also detected in most tissues.

It localises to the cell membrane. It is found in the cell projection. The protein localises to the axon. Its subcellular location is the growth cone. The protein resides in the synapse. It localises to the presynaptic cell membrane. It is found in the synaptosome. Functionally, calcium-independent receptor of high affinity for alpha-latrotoxin, an excitatory neurotoxin present in black widow spider venom which triggers massive exocytosis from neurons and neuroendocrine cells. Receptor probably implicated in the regulation of exocytosis. In terms of biological role, receptor for TENM2 that mediates heterophilic synaptic cell-cell contact and postsynaptic specialization. The polypeptide is Adhesion G protein-coupled receptor L1 (Rattus norvegicus (Rat)).